The primary structure comprises 360 residues: Photosystem II protein D1 2 (360 aa).

The next 3 helical transmembrane spans lie at 29–46 (YVGW…TATT), 118–133 (HFLI…EWEL), and 142–156 (WICV…AATA). A chlorophyll a-binding site is contributed by His-118. Residue Tyr-126 participates in pheophytin a binding. Residues Asp-170 and Glu-189 each contribute to the [CaMn4O5] cluster site. The helical transmembrane segment at 197 to 218 (FHMLGVAGVFGGSLFSAMHGSL) threads the bilayer. Position 198 (His-198) interacts with chlorophyll a. A quinone-binding positions include His-215 and 264-265 (SF). Residue His-215 participates in Fe cation binding. His-272 provides a ligand contact to Fe cation. Residues 274 to 288 (FLGAWPVVGIWFTAL) traverse the membrane as a helical segment. The [CaMn4O5] cluster site is built by His-332, Glu-333, Asp-342, and Ala-344. A propeptide spanning residues 345-360 (AGEQAPVALQAPAING) is cleaved from the precursor.

Belongs to the reaction center PufL/M/PsbA/D family. PSII is composed of 1 copy each of membrane proteins PsbA, PsbB, PsbC, PsbD, PsbE, PsbF, PsbH, PsbI, PsbJ, PsbK, PsbL, PsbM, PsbT, PsbX, PsbY, PsbZ, Psb30/Ycf12, peripheral proteins PsbO, CyanoQ (PsbQ), PsbU, PsbV and a large number of cofactors. It forms dimeric complexes. The cofactor is The D1/D2 heterodimer binds P680, chlorophylls that are the primary electron donor of PSII, and subsequent electron acceptors. It shares a non-heme iron and each subunit binds pheophytin, quinone, additional chlorophylls, carotenoids and lipids. D1 provides most of the ligands for the Mn4-Ca-O5 cluster of the oxygen-evolving complex (OEC). There is also a Cl(-1) ion associated with D1 and D2, which is required for oxygen evolution. The PSII complex binds additional chlorophylls, carotenoids and specific lipids.. In terms of processing, tyr-161 forms a radical intermediate that is referred to as redox-active TyrZ, YZ or Y-Z. Post-translationally, C-terminally processed by CtpA; processing is essential to allow assembly of the oxygen-evolving complex and thus photosynthetic growth.

The protein resides in the cellular thylakoid membrane. It catalyses the reaction 2 a plastoquinone + 4 hnu + 2 H2O = 2 a plastoquinol + O2. Functionally, photosystem II (PSII) is a light-driven water:plastoquinone oxidoreductase that uses light energy to abstract electrons from H(2)O, generating O(2) and a proton gradient subsequently used for ATP formation. It consists of a core antenna complex that captures photons, and an electron transfer chain that converts photonic excitation into a charge separation. The D1/D2 (PsbA/PsbD) reaction center heterodimer binds P680, the primary electron donor of PSII as well as several subsequent electron acceptors. This chain is Photosystem II protein D1 2, found in Picosynechococcus sp. (strain ATCC 27264 / PCC 7002 / PR-6) (Agmenellum quadruplicatum).